Here is a 393-residue protein sequence, read N- to C-terminus: Arginine--pyruvate transaminase AruH (393 aa).

Lys-237 carries the post-translational modification N6-(pyridoxal phosphate)lysine.

It belongs to the class-I pyridoxal-phosphate-dependent aminotransferase family. In terms of assembly, homodimer. It depends on pyridoxal 5'-phosphate as a cofactor.

The enzyme catalyses L-arginine + pyruvate = 5-guanidino-2-oxopentanoate + L-alanine. The protein operates within amino-acid degradation; L-arginine degradation. Catalyzes the conversion of L-arginine into 2-ketoarginine via transamination. L-arginine is the best substrate, but it can also use L-lysine, L-methionine, L-leucine, ornithine and L-glutamine, which indicates that it may have a broader physiological function in amino acid catabolism. The chain is Arginine--pyruvate transaminase AruH (aruH) from Pseudomonas aeruginosa (strain ATCC 15692 / DSM 22644 / CIP 104116 / JCM 14847 / LMG 12228 / 1C / PRS 101 / PAO1).